A 293-amino-acid chain; its full sequence is MIPPSYIGRFAPSPSGSLHFGSLVAALGSYLRAHSQQGQWLVRIEDIDPPREVPGASDNILRTLDAYGLHWHGTVLFQQQRYQVYQDQIEAFIASDLAYYCQCTRKIIQTSGGVYDGRCGRLQPRLTHGAIRIRNHVKVDHFVDKLQGPVVVDKAFAEEDFIIKRSDGLYAYQLAVVLDDAYQGITEVVRGCDLLEASCRQISLFTQLEFTPPDWLHLPLVCAEKGFKLSKQNYAPAIDVIHPQASINAALTFLGQKAVDVDSVEVMLKQAVEQFDLSTIPAQKEIVLSTIND.

L-glutamate is bound by residues 9–13 and Glu-45; that span reads RFAPS. Positions 12-22 match the 'HIGH' region motif; sequence PSPSGSLHFGS. The Zn(2+) site is built by Cys-101, Cys-103, Tyr-115, and Cys-119. Tyr-172 and Arg-190 together coordinate L-glutamate. The 'KMSKS' region signature appears at 228–232; sequence KLSKQ. Lys-231 contacts ATP.

It belongs to the class-I aminoacyl-tRNA synthetase family. GluQ subfamily. Requires Zn(2+) as cofactor.

Functionally, catalyzes the tRNA-independent activation of glutamate in presence of ATP and the subsequent transfer of glutamate onto a tRNA(Asp). Glutamate is transferred on the 2-amino-5-(4,5-dihydroxy-2-cyclopenten-1-yl) moiety of the queuosine in the wobble position of the QUC anticodon. The protein is Glutamyl-Q tRNA(Asp) synthetase of Shewanella frigidimarina (strain NCIMB 400).